Consider the following 338-residue polypeptide: Heat-inducible transcription repressor HrcA (338 aa).

Belongs to the HrcA family.

Its function is as follows. Negative regulator of class I heat shock genes (grpE-dnaK-dnaJ and groELS operons). Prevents heat-shock induction of these operons. This is Heat-inducible transcription repressor HrcA from Thermotoga sp. (strain RQ2).